We begin with the raw amino-acid sequence, 287 residues long: uncharacterized protein (287 aa).

Residues 115–287 (SLLSKETIKS…KKFLKKKLIS (173 aa)) form the ATP-grasp domain.

This is an uncharacterized protein from Mycoplasma genitalium (strain ATCC 33530 / DSM 19775 / NCTC 10195 / G37) (Mycoplasmoides genitalium).